Reading from the N-terminus, the 180-residue chain is NADH-quinone oxidoreductase subunit I (180 aa).

2 4Fe-4S ferredoxin-type domains span residues 50–80 (LTRDPDGEERCVACNLCAVACPVGCISLQKA) and 90–119 (EFFRINFSRCIFCGLCEEACPTTAIQLTPD). The [4Fe-4S] cluster site is built by Cys60, Cys63, Cys66, Cys70, Cys99, Cys102, Cys105, and Cys109.

Belongs to the complex I 23 kDa subunit family. NDH-1 is composed of 13 different subunits. Subunits NuoA, H, J, K, L, M, N constitute the membrane sector of the complex. It depends on [4Fe-4S] cluster as a cofactor.

The protein localises to the cell inner membrane. It catalyses the reaction a quinone + NADH + 5 H(+)(in) = a quinol + NAD(+) + 4 H(+)(out). Functionally, NDH-1 shuttles electrons from NADH, via FMN and iron-sulfur (Fe-S) centers, to quinones in the respiratory chain. The immediate electron acceptor for the enzyme in this species is believed to be ubiquinone. Couples the redox reaction to proton translocation (for every two electrons transferred, four hydrogen ions are translocated across the cytoplasmic membrane), and thus conserves the redox energy in a proton gradient. The protein is NADH-quinone oxidoreductase subunit I of Salmonella choleraesuis (strain SC-B67).